The following is a 195-amino-acid chain: Cell division protein SepF (195 aa).

Positions 32–54 (RYSKTNSSETLAPEEEEPIRNRR) are disordered.

This sequence belongs to the SepF family. As to quaternary structure, homodimer. Interacts with FtsZ.

Its subcellular location is the cytoplasm. Cell division protein that is part of the divisome complex and is recruited early to the Z-ring. Probably stimulates Z-ring formation, perhaps through the cross-linking of FtsZ protofilaments. Its function overlaps with FtsA. The polypeptide is Cell division protein SepF (Gloeothece citriformis (strain PCC 7424) (Cyanothece sp. (strain PCC 7424))).